Reading from the N-terminus, the 255-residue chain is Ribosomal RNA small subunit methyltransferase J (255 aa).

Residues 107-108 (RD), 123-124 (ER), and Asp-178 contribute to the S-adenosyl-L-methionine site. The segment at 228 to 247 (ARAEPLSGRKPSHQIPGKTT) is disordered.

Belongs to the methyltransferase superfamily. RsmJ family.

The protein localises to the cytoplasm. It catalyses the reaction guanosine(1516) in 16S rRNA + S-adenosyl-L-methionine = N(2)-methylguanosine(1516) in 16S rRNA + S-adenosyl-L-homocysteine + H(+). Its function is as follows. Specifically methylates the guanosine in position 1516 of 16S rRNA. The chain is Ribosomal RNA small subunit methyltransferase J from Thioalkalivibrio sulfidiphilus (strain HL-EbGR7).